The primary structure comprises 212 residues: Thymidylate kinase (212 aa).

10–17 contacts ATP; the sequence is GLEGAGKT.

This sequence belongs to the thymidylate kinase family.

The catalysed reaction is dTMP + ATP = dTDP + ADP. Phosphorylation of dTMP to form dTDP in both de novo and salvage pathways of dTTP synthesis. This Cronobacter sakazakii (strain ATCC BAA-894) (Enterobacter sakazakii) protein is Thymidylate kinase.